A 456-amino-acid polypeptide reads, in one-letter code: UDP-glycosyltransferase 84B1 (456 aa).

UDP-alpha-D-glucose is bound by residues Ser278, 332-334 (SPQ), 349-357 (HCGWNSTME), and 371-374 (WTDQ).

This sequence belongs to the UDP-glycosyltransferase family.

In terms of biological role, possesses low quercetin 7-O-glucosyltransferase activity in vitro. This Arabidopsis thaliana (Mouse-ear cress) protein is UDP-glycosyltransferase 84B1 (UGT84B1).